A 474-amino-acid chain; its full sequence is Methylenetetrahydrofolate--tRNA-(uracil-5-)-methyltransferase TrmFO (474 aa).

15–20 (GAGLAG) provides a ligand contact to FAD. Residues 453–474 (PLLPTAPDTTGAAGEETTQAES) are disordered.

The protein belongs to the MnmG family. TrmFO subfamily. It depends on FAD as a cofactor.

It is found in the cytoplasm. It catalyses the reaction uridine(54) in tRNA + (6R)-5,10-methylene-5,6,7,8-tetrahydrofolate + NADH + H(+) = 5-methyluridine(54) in tRNA + (6S)-5,6,7,8-tetrahydrofolate + NAD(+). The catalysed reaction is uridine(54) in tRNA + (6R)-5,10-methylene-5,6,7,8-tetrahydrofolate + NADPH + H(+) = 5-methyluridine(54) in tRNA + (6S)-5,6,7,8-tetrahydrofolate + NADP(+). Catalyzes the folate-dependent formation of 5-methyl-uridine at position 54 (M-5-U54) in all tRNAs. This is Methylenetetrahydrofolate--tRNA-(uracil-5-)-methyltransferase TrmFO from Nitratidesulfovibrio vulgaris (strain ATCC 29579 / DSM 644 / CCUG 34227 / NCIMB 8303 / VKM B-1760 / Hildenborough) (Desulfovibrio vulgaris).